The sequence spans 829 residues: MSASLFWKCSCPRRITLCPHWRPCQRLRVSLRHAPHLKRCAATLRVAAGSHDVPLAWPGLAHFLEHLLFLGTERFPVEQGLMAYVRAQGGQLNARTCERATEFFFELPASAFAGGLERLCEMLAQPRMSLEDQHREREVLHAEFIAWSRDATAQRQFALFDGLHAAHPLRAFHAGNRYSLNLPNNAFQQALQQFHREYYQAGQMVLSLAGPQPLEELRALAERYGSCLPSGQHLEQTAPPALMTTGNQTYQQLSGQRLDLLFALERLPAGATAAVDFLCTWLQSAKPGGLLAELQQRQLAHSLKATLLYEFAGQALLHLEFDLTSVAASAPVQVRELLTEWLGFFSAQADWAPLREEYVLLQQRQIEVASALELSRRDSRQAADGLDESGLAALKQVLKQLQPQAVEHFSHDWRLPPANPFLRSTIEAPRAGLIRGQTSAHRGLRTFAQDRSRGRKESSALSFSQALPADPSGSALTLRWQLASPAPMGLHARLLRSLATLRDDARQAGVELIFTSCGKDWLLKLHGLPSPMPAVLLQALKALGRPAESFWQEQASVNAEAPLLTIRQLLKAFSEQPQPDSPAQPDPEALQALWASARWDGLGLALPAAIQEALSRTLQQMPGTADATLCRPVPAGTGQQWQNLPGSAGEHALLLFYPVPSASLADEAAWRLLGQLCQTPFYQRLRVELQLGYGVFSAVRQRNGRTGLLFGVQSPGATVTEILQHIAQFLEHLPEQLQALDEPSWNDQQQALAQQLQPATLPLDQAMELLWQAKLAGHSSDYLPQLQGCIEALTPAIVIQAARQLREAAGGCSALANRPCPGTPWQVAE.

His-62 is a binding site for Zn(2+). Glu-65 functions as the Proton acceptor in the catalytic mechanism. The Zn(2+) site is built by His-66 and Glu-143.

The protein belongs to the peptidase M16 family. Requires Zn(2+) as cofactor.

It functions in the pathway cofactor biosynthesis; pyrroloquinoline quinone biosynthesis. Functionally, required for coenzyme pyrroloquinoline quinone (PQQ) biosynthesis. It is thought that this protein is a protease that cleaves peptides bond in a small peptide (gene pqqA), providing the glutamate and tyrosine residues which are necessary for the synthesis of PQQ. This chain is Coenzyme PQQ synthesis protein F (pqqF), found in Pseudomonas protegens (strain DSM 19095 / LMG 27888 / CFBP 6595 / CHA0).